Here is a 275-residue protein sequence, read N- to C-terminus: MRGEASRIADRVSRDSLAPKLRDSGEDAWRIGNELFTITNVLDHNIQLERALTDPSRPVEDKVAVVKTLIGDEAHPLTMEIMSDLVARRWSRVSDIANAAEDFGVDGMMYYADHTNATLQVSIELAQLHSALLNLPVVRSKLYDATVPAEARIKLLYSLIGNADFNVVTKRLAEHATCNLRNRRYLQTIQWLINKFSRHMGESMVTVTTATPLSKEQVKKLVAIYSAKTGHPVHINSVVDPTVLGGMRIQVGDEVTDNTVVAQLQHLQRTVKATA.

Belongs to the ATPase delta chain family. As to quaternary structure, F-type ATPases have 2 components, F(1) - the catalytic core - and F(0) - the membrane proton channel. F(1) has five subunits: alpha(3), beta(3), gamma(1), delta(1), epsilon(1). F(0) has three main subunits: a(1), b(2) and c(10-14). The alpha and beta chains form an alternating ring which encloses part of the gamma chain. F(1) is attached to F(0) by a central stalk formed by the gamma and epsilon chains, while a peripheral stalk is formed by the delta and b chains.

The protein resides in the cell membrane. Its function is as follows. F(1)F(0) ATP synthase produces ATP from ADP in the presence of a proton or sodium gradient. F-type ATPases consist of two structural domains, F(1) containing the extramembraneous catalytic core and F(0) containing the membrane proton channel, linked together by a central stalk and a peripheral stalk. During catalysis, ATP synthesis in the catalytic domain of F(1) is coupled via a rotary mechanism of the central stalk subunits to proton translocation. In terms of biological role, this protein is part of the stalk that links CF(0) to CF(1). It either transmits conformational changes from CF(0) to CF(1) or is implicated in proton conduction. The polypeptide is ATP synthase subunit delta (Bifidobacterium adolescentis (strain ATCC 15703 / DSM 20083 / NCTC 11814 / E194a)).